The chain runs to 239 residues: Serine protease SplC (239 aa).

Residues 1–36 (MNKNIVIKSMAALAILTSVTGINAAVVEETQQIANA) form the signal peptide. Active-site charge relay system residues include His-75, Asp-113, and Ser-193.

This sequence belongs to the peptidase S1B family.

It is found in the secreted. The sequence is that of Serine protease SplC (splC) from Staphylococcus aureus.